The chain runs to 428 residues: Protein terminus (428 aa).

The segment at 325–346 (CRRCRTQFSRRSKLHIHQKLRC) adopts a C3H1-type zinc-finger fold.

This Drosophila melanogaster (Fruit fly) protein is Protein terminus (term).